Reading from the N-terminus, the 469-residue chain is DNA polymerase delta subunit 2 (469 aa).

The residue at position 1 (M1) is an N-acetylmethionine. Residue S257 is modified to Phosphoserine.

This sequence belongs to the DNA polymerase delta/II small subunit family. As to quaternary structure, component of both the DNA polymerase delta and DNA polymerase zeta complexes. Component of the tetrameric DNA polymerase delta complex (Pol-delta4), which consists of POLD1/p125, POLD2/p50, POLD3/p66/p68 and POLD4/p12, with POLD1 bearing DNA polymerase and 3' to 5' proofreading exonuclease activities. Within Pol-delta4, directly interacts with POLD1, POLD3 and POLD4. Following stress caused by DNA damaging agents or by replication stress, POLD4 is degraded and Pol-delta4 is converted into a trimeric form of the complex (Pol-delta3), which consists of POLD1, POLD2 and POLD3. Pol-delta3 is the major form occurring at S phase replication sites, as well as DNA damage sites. Also observed as a dimeric complex with POLD2 (Pol-delta2 complex). Pol-delta2 is relatively insensitive to the PCNA stimulation (2-5-fold) compared to Pol-delta4 that is stimulated by over 50-fold. Contrary to the other components of Pol-delta4, does not directly interact with PCNA. As POLD1 and POLD4, directly interacts with WRNIP1; this interaction stimulates DNA polymerase delta-mediated DNA synthesis, independently of the presence of PCNA. This stimulation may be due predominantly to an increase of initiation frequency and also to increased processivity. Directly interacts with POLDIP2 and POLDIP3. Directly interacts with KCTD13/PDIP1; in the presence of PCNA, this interaction may stimulate DNA polymerase activity. Component of the tetrameric Pol-zeta complex (Pol-zeta4), which consists of REV3L, MAD2L2, POLD2 and POLD3, with REV3L bearing DNA polymerase catalytic activity. Interacts with KCTD10.

The protein resides in the nucleus. Its function is as follows. Accessory component of both the DNA polymerase delta complex and the DNA polymerase zeta complex. As a component of the trimeric and tetrameric DNA polymerase delta complexes (Pol-delta3 and Pol-delta4, respectively), plays a role in high fidelity genome replication, including in lagging strand synthesis, and repair. Pol-delta3 and Pol-delta4 are characterized by the absence or the presence of POLD4. They exhibit differences in catalytic activity. Most notably, Pol-delta3 shows higher proofreading activity than Pol-delta4. Although both Pol-delta3 and Pol-delta4 process Okazaki fragments in vitro, Pol-delta3 may also be better suited to fulfill this task, exhibiting near-absence of strand displacement activity compared to Pol-delta4 and stalling on encounter with the 5'-blocking oligonucleotides. Pol-delta3 idling process may avoid the formation of a gap, while maintaining a nick that can be readily ligated. Along with DNA polymerase kappa, DNA polymerase delta carries out approximately half of nucleotide excision repair (NER) synthesis following UV irradiation. Under conditions of DNA replication stress, required for the repair of broken replication forks through break-induced replication (BIR). Involved in the translesion synthesis (TLS) of templates carrying O6-methylguanine or abasic sites performed by Pol-delta4, independently of DNA polymerase zeta (REV3L) or eta (POLH). Facilitates abasic site bypass by DNA polymerase delta by promoting extension from the nucleotide inserted opposite the lesion. Also involved in TLS as a component of the DNA polymerase zeta complex. Along with POLD3, dramatically increases the efficiency and processivity of DNA synthesis of the DNA polymerase zeta complex compared to the minimal zeta complex, consisting of only REV3L and REV7. This chain is DNA polymerase delta subunit 2 (Pold2), found in Mus musculus (Mouse).